The chain runs to 318 residues: L-lactate dehydrogenase (318 aa).

NAD(+) is bound by residues Val17, Asp38, Lys43, Tyr69, and 83 to 84; that span reads GA. Gln86 and Arg92 together coordinate substrate. Residues Ser105, 122 to 124, and Ser147 contribute to the NAD(+) site; that span reads ATN. Position 124–127 (124–127) interacts with substrate; the sequence is NPVD. A substrate-binding site is contributed by 152–155; that stretch reads DTAR. 2 residues coordinate beta-D-fructose 1,6-bisphosphate: Lys157 and His172. Residue His179 is the Proton acceptor of the active site. A Phosphotyrosine modification is found at Tyr223. Thr232 contributes to the substrate binding site.

Belongs to the LDH/MDH superfamily. LDH family. As to quaternary structure, homotetramer.

It localises to the cytoplasm. The enzyme catalyses (S)-lactate + NAD(+) = pyruvate + NADH + H(+). Its pathway is fermentation; pyruvate fermentation to lactate; (S)-lactate from pyruvate: step 1/1. Its activity is regulated as follows. Allosterically activated by fructose 1,6-bisphosphate (FBP). Its function is as follows. Catalyzes the conversion of lactate to pyruvate. The protein is L-lactate dehydrogenase of Staphylococcus saprophyticus subsp. saprophyticus (strain ATCC 15305 / DSM 20229 / NCIMB 8711 / NCTC 7292 / S-41).